Reading from the N-terminus, the 171-residue chain is Large ribosomal subunit protein uL10 (171 aa).

It belongs to the universal ribosomal protein uL10 family. As to quaternary structure, part of the ribosomal stalk of the 50S ribosomal subunit. The N-terminus interacts with L11 and the large rRNA to form the base of the stalk. The C-terminus forms an elongated spine to which L12 dimers bind in a sequential fashion forming a multimeric L10(L12)X complex.

Its function is as follows. Forms part of the ribosomal stalk, playing a central role in the interaction of the ribosome with GTP-bound translation factors. The sequence is that of Large ribosomal subunit protein uL10 from Corynebacterium efficiens (strain DSM 44549 / YS-314 / AJ 12310 / JCM 11189 / NBRC 100395).